We begin with the raw amino-acid sequence, 348 residues long: Protein arginine N-methyltransferase 1 (348 aa).

Residues glutamate 20–lysine 322 enclose the SAM-dependent MTase PRMT-type domain. Residues histidine 33, arginine 42, glycine 66, aspartate 88, and glutamate 117 each coordinate S-adenosyl-L-methionine. Catalysis depends on residues glutamate 132 and glutamate 141.

It belongs to the class I-like SAM-binding methyltransferase superfamily. Protein arginine N-methyltransferase family. Homodimer. The dimers can then associate to form a ring-shaped homohexamer. Interacts with NPL3, BRE5, MTR4, SNF2, SUM1, and SSD1.

The protein resides in the nucleus. The catalysed reaction is L-arginyl-[protein] + S-adenosyl-L-methionine = N(omega)-methyl-L-arginyl-[protein] + S-adenosyl-L-homocysteine + H(+). It catalyses the reaction L-arginyl-[protein] + 2 S-adenosyl-L-methionine = N(omega),N(omega)-dimethyl-L-arginyl-[protein] + 2 S-adenosyl-L-homocysteine + 2 H(+). In terms of biological role, S-adenosyl-L-methionine-dependent protein-arginine N-methyltransferase that catalyzes both the mono- and asymmetric (type I) dimethylation of the guanidino nitrogens of arginine residues in a variety of RNA-binding proteins such as heterogeneous nuclear ribonucleoproteins (hnRNPs) and small nuclear ribonucleoproteins (snRNPs). Methylates NAB2, NPL3, HRP1 and YRA1, shuttling hnRNPs involved in mRNA processing and export, facilitating their export out of the nucleus. Methylation of NPL3 weakens its interaction with THO2, a component of the TREX (transcription/export) complex important for transcriptional elongation and recruitment of mRNA export factors. Methylates the hnRNP HRB1, but does not influence its subcellular location. Methylates the nucleolar proteins GAR1, NOP1 and NSR1. Methylates the snRNP SNP1 and modulates the cotranscriptional recruitment of splicing factors. Dimethylates free histone H4 (HHF1/HHF2) at 'Arg-4' (H4R3me2a) and plays a role in preservation and establishment of silent chromatin domains. Mono- and dimethylates ribosomal protein S2 (RPS2) at 'Arg-11'. Methylates the catalytic subunit of the SWI/SNF chromatin-remodeling complex SNF2. This chain is Protein arginine N-methyltransferase 1, found in Saccharomyces cerevisiae (strain ATCC 204508 / S288c) (Baker's yeast).